A 636-amino-acid polypeptide reads, in one-letter code: Molybdenum cofactor biosynthesis protein 1 (636 aa).

Residues 1–383 (MAARPAFGIV…QMKNRPMILI (383 aa)) form a molybdenum cofactor biosynthesis protein A region. The tract at residues 19–40 (RGCSSGAPVTQPRPGEPSRPTR) is disordered. S64 bears the Phosphoserine mark. Positions 64 to 279 (SFGRQHSYLR…TIRQRWPGLE (216 aa)) constitute a Radical SAM core domain. Position 73 (R73) interacts with GTP. Residues C80 and C84 each coordinate [4Fe-4S] cluster. Y86 is a binding site for S-adenosyl-L-methionine. C87 lines the [4Fe-4S] cluster pocket. R123 contacts GTP. S-adenosyl-L-methionine is bound at residue G127. T154 provides a ligand contact to GTP. Residue S178 participates in S-adenosyl-L-methionine binding. N6-acetyllysine is present on K198. K215 is a GTP binding site. M249 serves as a coordination point for S-adenosyl-L-methionine. C312 and C315 together coordinate [4Fe-4S] cluster. A GTP-binding site is contributed by 317 to 319 (RLR). C329 is a [4Fe-4S] cluster binding site. The tract at residues 414 to 636 (QCLSDQMASL…GGQRGDFHRA (223 aa)) is molybdenum cofactor biosynthesis protein C. Residues 444 to 484 (SPQRHYSSYPDPDTHSKCLSTGSQAPDAPSGPGPTSNQLTH) are disordered. K528 bears the N6-acetyllysine mark. The For molybdenum cofactor biosynthesis protein C activity role is filled by D606.

It in the C-terminal section; belongs to the MoaC family. This sequence in the N-terminal section; belongs to the radical SAM superfamily. MoaA family. In terms of assembly, isoform Mocs1a and isoform Mocs1b probably form a heterooligomer. Requires [4Fe-4S] cluster as cofactor.

The catalysed reaction is GTP + AH2 + S-adenosyl-L-methionine = (8S)-3',8-cyclo-7,8-dihydroguanosine 5'-triphosphate + 5'-deoxyadenosine + L-methionine + A + H(+). It carries out the reaction (8S)-3',8-cyclo-7,8-dihydroguanosine 5'-triphosphate = cyclic pyranopterin phosphate + diphosphate. Its pathway is cofactor biosynthesis; molybdopterin biosynthesis. Functionally, isoform Mocs1a and isoform Mocs1b probably form a complex that catalyzes the conversion of 5'-GTP to cyclic pyranopterin monophosphate (cPMP). Mocs1a catalyzes the cyclization of GTP to (8S)-3',8-cyclo-7,8-dihydroguanosine 5'-triphosphate and Mocs1b catalyzes the subsequent conversion of (8S)-3',8-cyclo-7,8-dihydroguanosine 5'-triphosphate to cPMP. This Mus musculus (Mouse) protein is Molybdenum cofactor biosynthesis protein 1 (Mocs1).